A 407-amino-acid polypeptide reads, in one-letter code: Argininosuccinate synthase (407 aa).

Residues 16-24 and Ala-44 contribute to the ATP site; that span reads AYSGGLDTS. Positions 96 and 101 each coordinate L-citrulline. Gly-126 lines the ATP pocket. The L-aspartate site is built by Thr-128, Asn-132, and Asp-133. Residue Asn-132 participates in L-citrulline binding. Residues Arg-136, Ser-185, Ser-194, Glu-270, and Tyr-282 each contribute to the L-citrulline site.

This sequence belongs to the argininosuccinate synthase family. Type 1 subfamily. In terms of assembly, homotetramer.

It localises to the cytoplasm. The catalysed reaction is L-citrulline + L-aspartate + ATP = 2-(N(omega)-L-arginino)succinate + AMP + diphosphate + H(+). Its pathway is amino-acid biosynthesis; L-arginine biosynthesis; L-arginine from L-ornithine and carbamoyl phosphate: step 2/3. The protein is Argininosuccinate synthase of Shewanella sp. (strain W3-18-1).